We begin with the raw amino-acid sequence, 338 residues long: Malate dehydrogenase, mitochondrial (338 aa).

Residues 1–24 (MLSALARPAGAALRRSFSTSAQNN) constitute a mitochondrion transit peptide. Residues 31–37 (GASGGIG) and D57 contribute to the NAD(+) site. S33 is a glycosylation site (O-linked (GlcNAc) serine). N6-acetyllysine; alternate occurs at positions 78 and 91. An N6-succinyllysine; alternate mark is found at K78 and K91. Substrate contacts are provided by R104 and R110. NAD(+) contacts are provided by residues N117 and 140–142 (IAN). Position 142 (N142) interacts with substrate. Residue K165 is modified to N6-acetyllysine. Residue R176 coordinates substrate. K185 is modified (N6-acetyllysine; alternate). At K185 the chain carries N6-succinyllysine; alternate. Catalysis depends on H200, which acts as the Proton acceptor. K203 is modified (N6-succinyllysine). N6-acetyllysine; alternate occurs at positions 215 and 239. Residues K215 and K239 each carry the N6-succinyllysine; alternate modification. K239 carries the N6-malonyllysine; alternate modification. Phosphoserine is present on S246. Residue M251 participates in NAD(+) binding. N6-succinyllysine is present on K269. K296, K301, and K307 each carry N6-acetyllysine; alternate. 3 positions are modified to N6-succinyllysine; alternate: K296, K301, and K307. Residue K307 is modified to N6-malonyllysine; alternate. A Phosphothreonine modification is found at T309. An N6-acetyllysine; alternate mark is found at K314 and K324. An N6-succinyllysine; alternate mark is found at K314 and K324. S326 bears the Phosphoserine mark. N6-acetyllysine; alternate is present on residues K328, K329, and K335. K328 carries the post-translational modification N6-succinyllysine; alternate. At K329 the chain carries N6-malonyllysine; alternate. An N6-succinyllysine; alternate modification is found at K335.

The protein belongs to the LDH/MDH superfamily. MDH type 1 family. As to quaternary structure, homodimer. In terms of processing, acetylation is enhanced after treatment either with trichostin A (TCA) or with nicotinamide (NAM) with the appearance of tri- and tetraacetylations. Glucose also increases acetylation. Acetylation of Lys-239 and Lys-314 is observed in liver mitochondria from fasted mice but not from fed mice.

Its subcellular location is the mitochondrion matrix. It catalyses the reaction (S)-malate + NAD(+) = oxaloacetate + NADH + H(+). Enzyme activity is enhanced by acetylation. This is Malate dehydrogenase, mitochondrial (Mdh2) from Mus musculus (Mouse).